A 363-amino-acid chain; its full sequence is G kinase-anchoring protein 1 (363 aa).

The segment at 1-93 is interaction with IRS1; it reads MASAVLSSVP…SHAICNAQHE (93 aa). 2 disordered regions span residues 20 to 111 and 145 to 171; these read QVDS…NWQE and EYEN…HQGK. 3 positions are modified to phosphoserine: Ser23, Ser25, and Ser27. Residues 39-48 show a composition bias toward polar residues; it reads TGKSQTNKST. Positions 43-75 form a coiled coil; sequence QTNKSTTNEKKREKRRKKKEQQQSEANELRNLA. Positions 102–111 are enriched in basic and acidic residues; the sequence is KDSREENWQE. Ser104 bears the Phosphoserine; by PKG mark. Coiled-coil stretches lie at residues 126–158 and 240–350; these read ADLE…QSKV and EHNQ…YQGG.

Belongs to the GKAP1 family. Interacts with PRKG1 and IRS1.

Its subcellular location is the golgi apparatus. Its function is as follows. Regulates insulin-dependent IRS1 tyrosine phosphorylation in adipocytes by modulating the availability of IRS1 to IR tyrosine kinase. Its association with IRS1 is required for insulin-induced translocation of SLC2A4 to the cell membrane. Involved in TNF-induced impairment of insulin-dependent IRS1 tyrosine phosphorylation. The chain is G kinase-anchoring protein 1 (GKAP1) from Bos taurus (Bovine).